Here is a 54-residue protein sequence, read N- to C-terminus: Califin-B (54 aa).

A disulfide bridge connects residues Cys25 and Cys53. Leu36 is subject to Leucine amide.

Belongs to the molluscan ELH family. This protein consists of a large 36-residue subunit, bound by a single disulfide-bond to a small 18-residue subunit.

The protein localises to the secreted. In terms of biological role, injected in sexually mature animals califin B excites LB and LC cells of the abdominal ganglion and cause egg-laying. This chain is Califin-B, found in Aplysia californica (California sea hare).